A 116-amino-acid polypeptide reads, in one-letter code: Ribonuclease P protein component (116 aa).

Belongs to the RnpA family. In terms of assembly, consists of a catalytic RNA component (M1 or rnpB) and a protein subunit.

It catalyses the reaction Endonucleolytic cleavage of RNA, removing 5'-extranucleotides from tRNA precursor.. RNaseP catalyzes the removal of the 5'-leader sequence from pre-tRNA to produce the mature 5'-terminus. It can also cleave other RNA substrates such as 4.5S RNA. The protein component plays an auxiliary but essential role in vivo by binding to the 5'-leader sequence and broadening the substrate specificity of the ribozyme. The protein is Ribonuclease P protein component of Citrifermentans bemidjiense (strain ATCC BAA-1014 / DSM 16622 / JCM 12645 / Bem) (Geobacter bemidjiensis).